Reading from the N-terminus, the 513-residue chain is MVWYSSCRILFLGLLILLASSWVLDRCEGFGEFGFEFHHRFSDQVVGVLPGDGLPNRDSSKYYRVMAHRDRLIRGRRLANEDQSLVTFSDGNETVRVDALGFLHYANVTVGTPSDWFMVALDTGSDLFWLPCDCTNCVRELKAPGGSSLDLNIYSPNASSTSTKVPCNSTLCTRGDRCASPESDCPYQIRYLSNGTSSTGVLVEDVLHLVSNDKSSKAIPARVTFGCGQVQTGVFHDGAAPNGLFGLGLEDISVPSVLAKEGIAANSFSMCFGNDGAGRISFGDKGSVDQRETPLNIRQPHPTYNITVTKISVGGNTGDLEFDAVFDSGTSFTYLTDAAYTLISESFNSLALDKRYQTTDSELPFEYCYALSPNKDSFQYPAVNLTMKGGSSYPVYHPLVVIPMKDTDVYCLAIMKIEDISIIGQNFMTGYRVVFDREKLILGWKESDCYTGETSARTLPSNRSSSSARPPASSFDPEATNIPSQRPNTSTTSAAYSLSISLSLFFFSILAIL.

A signal peptide spans 1–21 (MVWYSSCRILFLGLLILLASS). The 342-residue stretch at 104-445 (HYANVTVGTP…DREKLILGWK (342 aa)) folds into the Peptidase A1 domain. Active-site residues include aspartate 122 and aspartate 327. The disordered stretch occupies residues 452 to 488 (GETSARTLPSNRSSSSARPPASSFDPEATNIPSQRPN). Low complexity predominate over residues 455-474 (SARTLPSNRSSSSARPPASS). Residue serine 484 is the site of GPI-anchor amidated serine attachment. Residues 485–513 (QRPNTSTTSAAYSLSISLSLFFFSILAIL) constitute a propeptide, removed in mature form.

Belongs to the peptidase A1 family.

It is found in the cell membrane. Its function is as follows. Aspartyl protease. Not able to cleave BAG6. The chain is Aspartyl protease family protein 1 from Arabidopsis thaliana (Mouse-ear cress).